The following is a 322-amino-acid chain: HPr kinase/phosphorylase (322 aa).

Catalysis depends on residues H146 and K167. 161–168 (GDSGLGKS) provides a ligand contact to ATP. S168 provides a ligand contact to Mg(2+). D185 (proton acceptor; for phosphorylation activity. Proton donor; for dephosphorylation activity) is an active-site residue. The important for the catalytic mechanism of both phosphorylation and dephosphorylation stretch occupies residues 209 to 218 (LEVRGLGLLD). E210 is a binding site for Mg(2+). Residue R250 is part of the active site. Residues 271-276 (QVAAGR) are important for the catalytic mechanism of dephosphorylation.

Belongs to the HPrK/P family. Homohexamer. Mg(2+) serves as cofactor.

It catalyses the reaction [HPr protein]-L-serine + ATP = [HPr protein]-O-phospho-L-serine + ADP + H(+). The enzyme catalyses [HPr protein]-O-phospho-L-serine + phosphate + H(+) = [HPr protein]-L-serine + diphosphate. Functionally, catalyzes the ATP- as well as the pyrophosphate-dependent phosphorylation of a specific serine residue in HPr, a phosphocarrier protein of the phosphoenolpyruvate-dependent sugar phosphotransferase system (PTS). HprK/P also catalyzes the pyrophosphate-producing, inorganic phosphate-dependent dephosphorylation (phosphorolysis) of seryl-phosphorylated HPr (P-Ser-HPr). The sequence is that of HPr kinase/phosphorylase from Paraburkholderia phymatum (strain DSM 17167 / CIP 108236 / LMG 21445 / STM815) (Burkholderia phymatum).